The sequence spans 336 residues: Electron transfer flavoprotein subunit alpha (336 aa).

275 to 303 (LYIACGISGAIQHLAGMQDSDYIIAINKD) serves as a coordination point for FAD.

Belongs to the ETF alpha-subunit/FixB family. As to quaternary structure, heterodimer of an alpha and a beta subunit. FAD serves as cofactor.

Its function is as follows. The electron transfer flavoprotein serves as a specific electron acceptor for other dehydrogenases. It transfers the electrons to the main respiratory chain via ETF-ubiquinone oxidoreductase (ETF dehydrogenase). The sequence is that of Electron transfer flavoprotein subunit alpha (etfA) from Clostridium acetobutylicum (strain ATCC 824 / DSM 792 / JCM 1419 / IAM 19013 / LMG 5710 / NBRC 13948 / NRRL B-527 / VKM B-1787 / 2291 / W).